Here is a 786-residue protein sequence, read N- to C-terminus: Receptor-interacting serine/threonine-protein kinase 4 (786 aa).

Residues 22 to 286 form the Protein kinase domain; that stretch reads FAGWEKVGSG…QEITSETEDL (265 aa). ATP-binding positions include 28–36 and lysine 51; that span reads VGSGGFGQV. Lysine 51 is covalently cross-linked (Glycyl lysine isopeptide (Lys-Gly) (interchain with G-Cter in ubiquitin)). Residue aspartate 143 is the Proton acceptor of the active site. Lysine 145 participates in a covalent cross-link: Glycyl lysine isopeptide (Lys-Gly) (interchain with G-Cter in ubiquitin). 2 disordered regions span residues 293–328 and 347–378; these read EVKDLAHEPGEKSSLESKSEARPESSRLKRASAPPF and QTLEGPEELSRSSSECKLPSSSSGKRLSGVSS. Basic and acidic residues predominate over residues 295–319; sequence KDLAHEPGEKSSLESKSEARPESSR. The span at 357 to 378 shows a compositional bias: low complexity; sequence RSSSECKLPSSSSGKRLSGVSS. 10 ANK repeats span residues 439 to 468, 472 to 501, 505 to 534, 538 to 567, 571 to 601, 605 to 634, 638 to 667, 671 to 700, 704 to 734, and 736 to 765; these read SSASLLHLAVEAGQEECVKWLLLNNANPNL, KGSTPLHMAVERKGRGIVELLLARKTSVNA, DQWTALHFAAQNGDEASTRLLLEKNASVNE, EGRTPMHVACQHGQENIVRTLLRRGVDVGL, DAWLPLHYAAWQGHLPIVKLLAKQPGVSVNA, DGRTPLHLAAQRGHYRVARILIDLCSDVNI, QAQTPLHVAAETGHTSTARLLLHRGAGKEA, EGYTALHLAAQNGHLATVKLLIEEKADVMA, LNQTALHLAAARGHSEVVEELVSADLIDLSD, and QGLSALHLAAQGRHSQTVETLLKHGAHINL.

This sequence belongs to the protein kinase superfamily. TKL Ser/Thr protein kinase family. In terms of assembly, interacts with PRKCB. Interacts with TRAF1, TRAF2, TRAF3 and TRAF5. Interacts with BIRC2/c-IAP1, BIRC3/c-IAP2 and XIAP/BIRC4. Post-translationally, may be phosphorylated by MAP3K2 and MAP3K3. In terms of processing, proteolytically cleaved by during Fas-induced apoptosis. Cleavage at Asp-342 and Asp-380. Polyubiquitinated with 'Lys-48' and 'Lys-63'-linked chains by BIRC2/c-IAP1 and BIRC3/c-IAP2, leading to activation of NF-kappa-B. In terms of tissue distribution, expressed in the epidermis of the skin (at protein level). Ubiquitously expressed, with an abundant expression in the thymus, bone marrow, pro-B, pre-B and immature B cells and a weak expression in the spleen.

Its subcellular location is the cytoplasm. It is found in the membrane. It carries out the reaction L-seryl-[protein] + ATP = O-phospho-L-seryl-[protein] + ADP + H(+). The catalysed reaction is L-threonyl-[protein] + ATP = O-phospho-L-threonyl-[protein] + ADP + H(+). In terms of biological role, serine/threonine protein kinase. Required for embryonic skin development and correct skin homeostasis in adults, via phosphorylation of PKP1 and subsequent promotion of keratinocyte differentiation and cell adhesion. It is a direct transcriptional target of TP63. Plays a role in NF-kappa-B activation. This Mus musculus (Mouse) protein is Receptor-interacting serine/threonine-protein kinase 4 (Ripk4).